A 211-amino-acid polypeptide reads, in one-letter code: MPEPIIIEPEPAVAGSLFGDRIDVAREFTAQLGQRGEELGLIGPLEPPRLWSRHVINSVLVAPLLRPGLVGDIGTGAGLPGLVLAIARPDVDFVLIEPMERRVAWLEEQVAHLALGNVSVRRARAEEVAQEFNLDQVTARAVSAFAKLIPLTVPLVKTGGELVLMKGSNAEREVEAASKAIRKYHLEDVEVITLGSGQVDEVTRVVRARVA.

S-adenosyl-L-methionine-binding positions include G74, L79, 125–126, and R140; that span reads AE.

The protein belongs to the methyltransferase superfamily. RNA methyltransferase RsmG family.

The protein localises to the cytoplasm. Its function is as follows. Specifically methylates the N7 position of guanine in position 518 of 16S rRNA. This Clavibacter michiganensis subsp. michiganensis (strain NCPPB 382) protein is Ribosomal RNA small subunit methyltransferase G.